The following is a 313-amino-acid chain: Arabinooligosaccharides transport system permease protein AraP (313 aa).

The next 6 membrane-spanning stretches (helical) occupy residues 39–59 (FVLS…IMSF), 91–111 (LEYT…LAIF), 126–146 (ALFI…RLIF), 176–196 (MFLM…LYFL), 224–244 (ITLP…IIGG), and 281–301 (MGYG…VSLI). One can recognise an ABC transmembrane type-1 domain in the interval 87–302 (LWNTLEYTFW…IVILVVSLIS (216 aa)).

The protein belongs to the binding-protein-dependent transport system permease family. MalFG subfamily. In terms of assembly, the complex is composed of two ATP-binding proteins (MsmX), two transmembrane proteins (AraP and AraQ) and a solute-binding protein (AraN).

It is found in the cell membrane. In terms of biological role, part of the ABC transporter complex AraNPQ involved in the uptake of arabinooligosaccharides. Transports alpha-1,5-arabinooligosaccharides, at least up to four L-arabinosyl units. Responsible for the translocation of the substrate across the membrane. The protein is Arabinooligosaccharides transport system permease protein AraP of Bacillus subtilis (strain 168).